A 77-amino-acid polypeptide reads, in one-letter code: Translation initiation factor IF-1, chloroplastic (77 aa).

The S1-like domain maps to 1-71 (MKEQKWIHEG…TRGRIIYRLR (71 aa)).

Belongs to the IF-1 family. In terms of assembly, component of the 30S ribosomal translation pre-initiation complex which assembles on the 30S ribosome in the order IF-2 and IF-3, IF-1 and N-formylmethionyl-tRNA(fMet); mRNA recruitment can occur at any time during PIC assembly.

It localises to the plastid. The protein resides in the chloroplast. Its function is as follows. One of the essential components for the initiation of protein synthesis. Stabilizes the binding of IF-2 and IF-3 on the 30S subunit to which N-formylmethionyl-tRNA(fMet) subsequently binds. Helps modulate mRNA selection, yielding the 30S pre-initiation complex (PIC). Upon addition of the 50S ribosomal subunit IF-1, IF-2 and IF-3 are released leaving the mature 70S translation initiation complex. The protein is Translation initiation factor IF-1, chloroplastic of Antirrhinum majus (Garden snapdragon).